The chain runs to 282 residues: MIFLIAIIPALCWGINPLLVGKINGHSENEMFGMGIGDGLIALIFWLFSQPTVTISGVTFGLAMISGAAWAIGQLGQYISYRLLGVSKTMPISTALQLVGTSLIGVLMFGEWGSSNQKILGLLAIMLIVAGSALSAGTSDGRKKGFSCYLPLLMTTIGYWIYSCIPKLVKVDALQLFLPQMLGILIVAVGWAIYHQPTVYRDKQSWQNTLPGILYGIAAFMYILSARSIGVTNAYIIGQLSVVISTLSGLFFLHERTGQQSIVSVATGLLFIFMGCVTTALI.

The next 10 helical transmembrane spans lie at 2 to 21, 31 to 48, 53 to 75, 90 to 112, 119 to 136, 146 to 163, 176 to 194, 209 to 226, 233 to 252, and 262 to 281; these read IFLIAIIPALCWGINPLLVG, MFGMGIGDGLIALIFWLF, VTISGVTFGLAMISGAAWAIGQL, MPISTALQLVGTSLIGVLMFGEW, ILGLLAIMLIVAGSALSA, FSCYLPLLMTTIGYWIYS, LFLPQMLGILIVAVGWAIY, TLPGILYGIAAFMYILSA, NAYIIGQLSVVISTLSGLFF, and IVSVATGLLFIFMGCVTTAL.

This sequence belongs to the GRP transporter (TC 2.A.7.5) family.

The protein localises to the cell membrane. The protein is Putative sugar uptake protein lp_2594 of Lactiplantibacillus plantarum (strain ATCC BAA-793 / NCIMB 8826 / WCFS1) (Lactobacillus plantarum).